Here is a 359-residue protein sequence, read N- to C-terminus: CCAAT/enhancer-binding protein alpha (359 aa).

The disordered stretch occupies residues 1–55; the sequence is MESADFYEVEPRPPMSSHLQSPPHAPSNAAFGFPRGAGPAPPPAPPAAPEPLGGI. The interval 1–70 is required to repress E2F1:TFDP1-mediated transcription, to inhibit cell cycle and to induce adipocyte differentiation; it reads MESADFYEVE…SIDISAYIDP (70 aa). Residues 29–38 show a composition bias toward low complexity; sequence AAFGFPRGAG. Residues 39–49 show a composition bias toward pro residues; it reads PAPPPAPPAAP. A required for interaction with TRIB1 region spans residues 54–72; the sequence is GICEHETSIDISAYIDPAA. Residues 126–200 are required to induce adipocyte differentiation; the sequence is PPGYGCAAAG…HASPAHLAAP (75 aa). Lysine 159 bears the N6-acetyllysine; alternate mark. Lysine 159 is covalently cross-linked (Glycyl lysine isopeptide (Lys-Gly) (interchain with G-Cter in SUMO); alternate). A Glycyl lysine isopeptide (Lys-Gly) (interchain with G-Cter in SUMO2); alternate cross-link involves residue lysine 159. Disordered regions lie at residues 176–195 and 213–293; these read LFPY…ASPA and TMHL…RERN. The segment covering 179–191 has biased composition (pro residues); it reads YQPPPPPPPPHPH. The interval 180-194 is required to functionally cooperate with SREBF1 in promoter activation; that stretch reads QPPPPPPPPHPHASP. Phosphoserine is present on serine 193. Residues 220–232 show a composition bias toward pro residues; that stretch reads HPTPPPTPVPSPH. Residues threonine 222 and threonine 226 each carry the phosphothreonine; by GSK3 modification. Residue serine 230 is modified to Phosphoserine; by GSK3. Low complexity predominate over residues 233-255; the sequence is AAPALGAAGLPGPGSALKGLAGA. Residues 240–359 form an interaction with FOXO1 region; the sequence is AGLPGPGSAL…SLVKAMGNCA (120 aa). The segment covering 261 to 272 has biased composition (gly residues); the sequence is TGGGGGGSGAGA. Positions 277 to 293 are enriched in basic and acidic residues; sequence KSVDKNSNEYRVRRERN. In terms of domain architecture, bZIP spans 283–346; it reads SNEYRVRRER…DTLRGIFRQL (64 aa). A DNA-binding region spans residues 286-301; that stretch reads YRVRRERNNIAVRKSR. Residues 287–314 are basic motif; that stretch reads RVRRERNNIAVRKSRDKAKQRNVETQQK. Positions 318 to 346 are leucine-zipper; the sequence is LTSDNDRLRKRVEQLSRELDTLRGIFRQL.

This sequence belongs to the bZIP family. C/EBP subfamily. As to quaternary structure, binds DNA as a homodimer and as a heterodimer. Can form stable heterodimers with CEBPB, CEBPD, CEBPE and CEBPG. Interacts with PRDM16. Interacts with UBN1. Interacts with ZNF638; this interaction increases transcriptional activation. Interacts with the complex TFDP2:E2F1; the interaction prevents CEBPA binding to target gene promoters and represses its transcriptional activity. Interacts with RB1. Interacts (when phosphorylated at Ser-193) with CDK2, CDK4, E2F4 and SMARCA2. Interacts with SREBPF1. Interacts with FOXO1 (via the Fork-head domain); the interaction increases when FOXO1 is deacetylated. Interacts with SIX1. Interacts (via recognition sequence) with TRIB1. Interacts (via bZIP domain) with OVOL2 (via zinc-finger domains); the interaction inhibits the transcription factor activity of CEBPA and is required to repress adipogenesis. In terms of assembly, interacts with TAF1A and UBTF. Interacts with TAF1A and UBTF. Interacts with NPM1. Sumoylated, sumoylation blocks the inhibitory effect on cell proliferation by disrupting the interaction with SMARCA2. In terms of processing, phosphorylation at Ser-193 is required for interaction with CDK2, CDK4 and SWI/SNF complex leading to cell cycle inhibition. Dephosphorylated at Ser-193 by protein phosphatase 2A (PP2A) through PI3K/AKT signaling pathway regulation. Phosphorylation at Thr-222 and Thr-226 by GSK3 is constitutive in adipose tissue and lung. In liver, both Thr-222 and Thr-226 are phosphorylated only during feeding but not during fasting. Phosphorylation of the GSK3 consensus sites selectively decreases transactivation activity on IRE-controlled promoters. Post-translationally, ubiquitinated by COP1 upon interaction with TRIB1. Isoform 2 and isoform 3 are expressed in adipose tissue and liver (at protein level).

The protein localises to the nucleus. The protein resides in the nucleolus. In terms of biological role, transcription factor that coordinates proliferation arrest and the differentiation of myeloid progenitors, adipocytes, hepatocytes, and cells of the lung and the placenta. Binds directly to the consensus DNA sequence 5'-T[TG]NNGNAA[TG]-3' acting as an activator on distinct target genes. During early embryogenesis, plays essential and redundant functions with CEBPB. Essential for the transition from common myeloid progenitors (CMP) to granulocyte/monocyte progenitors (GMP). Critical for the proper development of the liver and the lung. Necessary for terminal adipocyte differentiation, is required for postnatal maintenance of systemic energy homeostasis and lipid storage. To regulate these different processes at the proper moment and tissue, interplays with other transcription factors and modulators. Down-regulates the expression of genes that maintain cells in an undifferentiated and proliferative state through E2F1 repression, which is critical for its ability to induce adipocyte and granulocyte terminal differentiation. Reciprocally E2F1 blocks adipocyte differentiation by binding to specific promoters and repressing CEBPA binding to its target gene promoters. Proliferation arrest also depends on a functional binding to SWI/SNF complex. In liver, regulates gluconeogenesis and lipogenesis through different mechanisms. To regulate gluconeogenesis, functionally cooperates with FOXO1 binding to IRE-controlled promoters and regulating the expression of target genes such as PCK1 or G6PC1. To modulate lipogenesis, interacts and transcriptionally synergizes with SREBF1 in promoter activation of specific lipogenic target genes such as ACAS2. In adipose tissue, seems to act as FOXO1 coactivator accessing to ADIPOQ promoter through FOXO1 binding sites. Its function is as follows. Can act as dominant-negative. Binds DNA and have transctivation activity, even if much less efficiently than isoform 2. Does not inhibit cell proliferation. Directly and specifically enhances ribosomal DNA transcription interacting with RNA polymerase I-specific cofactors and inducing histone acetylation. The chain is CCAAT/enhancer-binding protein alpha from Mus musculus (Mouse).